Reading from the N-terminus, the 143-residue chain is Large ribosomal subunit protein uL11 (143 aa).

The protein belongs to the universal ribosomal protein uL11 family. Part of the ribosomal stalk of the 50S ribosomal subunit. Interacts with L10 and the large rRNA to form the base of the stalk. L10 forms an elongated spine to which L12 dimers bind in a sequential fashion forming a multimeric L10(L12)X complex. In terms of processing, one or more lysine residues are methylated.

Its function is as follows. Forms part of the ribosomal stalk which helps the ribosome interact with GTP-bound translation factors. The polypeptide is Large ribosomal subunit protein uL11 (Psychrobacter cryohalolentis (strain ATCC BAA-1226 / DSM 17306 / VKM B-2378 / K5)).